Reading from the N-terminus, the 349-residue chain is Rhodopsin (349 aa).

Over 1–33 the chain is Extracellular; the sequence is TEGPYFYIPMSNATGIVRSPYEYPQYYLVYPAA. N12 carries an N-linked (GlcNAc...) asparagine glycan. The helical transmembrane segment at 34–58 threads the bilayer; the sequence is YAVLGAYMFFLIIFGFPVNFLTLYV. Residues 59 to 70 lie on the Cytoplasmic side of the membrane; the sequence is TIEHKKLRTPLN. A helical membrane pass occupies residues 71 to 93; sequence YILLNLAVADLFMVIGGFTTTIY. Topologically, residues 94–107 are extracellular; that stretch reads TSMHGYFVLGRLGC. Residues C107 and C184 are joined by a disulfide bond. The helical transmembrane segment at 108-130 threads the bilayer; sequence NLEGFSATLGGMIGLWSLVVLAI. A 'Ionic lock' involved in activated form stabilization motif is present at residues 131–133; sequence ERW. The Cytoplasmic segment spans residues 131–149; the sequence is ERWVVVCKPMSNFRFGENH. Residues 150-170 form a helical membrane-spanning segment; the sequence is AIMGVTLTWVMGLACTVPPLV. Residues 171–199 are Extracellular-facing; sequence GWSRYIPEGMQCSCGIDYYTRAEGFNNDS. An N-linked (GlcNAc...) asparagine glycan is attached at N197. Residues 200–221 traverse the membrane as a helical segment; that stretch reads YVLYMFVCHFLIPLVVIFFCYG. Over 222-249 the chain is Cytoplasmic; that stretch reads RLLCAVKEAAAAQQESETTQRAEREVTR. The chain crosses the membrane as a helical span at residues 250–271; that stretch reads MVILMVIGFLVCWLPYASVAWY. At 272–283 the chain is on the extracellular side; it reads IFTHQGSEFGPL. A helical membrane pass occupies residues 284–305; it reads FMTIPAFFAKSSSIYNPVIYIC. The residue at position 293 (K293) is an N6-(retinylidene)lysine. Residues 306–349 are Cytoplasmic-facing; that stretch reads MNKQFRQCMLTTLFCGKNPFEEEEGASSTKTEASSASSSSVSPA. The S-palmitoyl cysteine moiety is linked to residue C320. Positions 326 to 349 are disordered; sequence EEEEGASSTKTEASSASSSSVSPA. Positions 331–349 are enriched in low complexity; it reads ASSTKTEASSASSSSVSPA.

The protein belongs to the G-protein coupled receptor 1 family. Opsin subfamily. In terms of processing, phosphorylated on some or all of the serine and threonine residues present in the C-terminal region. Contains one covalently linked retinal chromophore.

Its subcellular location is the membrane. It localises to the cell projection. It is found in the cilium. The protein resides in the photoreceptor outer segment. Photoreceptor required for image-forming vision at low light intensity. While most salt water fish species use retinal as chromophore, most freshwater fish use 3-dehydroretinal, or a mixture of retinal and 3-dehydroretinal. Light-induced isomerization of 11-cis to all-trans retinal triggers a conformational change that activates signaling via G-proteins. Subsequent receptor phosphorylation mediates displacement of the bound G-protein alpha subunit by arrestin and terminates signaling. This chain is Rhodopsin (rho), found in Myripristis violacea (Lattice soldierfish).